We begin with the raw amino-acid sequence, 407 residues long: Imidazolonepropionase (407 aa).

2 residues coordinate Fe(3+): His-74 and His-76. Zn(2+)-binding residues include His-74 and His-76. Residues Arg-83, Tyr-146, and His-179 each coordinate 4-imidazolone-5-propanoate. Tyr-146 serves as a coordination point for N-formimidoyl-L-glutamate. His-244 is a Fe(3+) binding site. His-244 contributes to the Zn(2+) binding site. Gln-247 lines the 4-imidazolone-5-propanoate pocket. Asp-319 provides a ligand contact to Fe(3+). Residue Asp-319 participates in Zn(2+) binding. N-formimidoyl-L-glutamate is bound by residues Asn-321 and Gly-323. Residue Thr-324 coordinates 4-imidazolone-5-propanoate.

The protein belongs to the metallo-dependent hydrolases superfamily. HutI family. It depends on Zn(2+) as a cofactor. The cofactor is Fe(3+).

It is found in the cytoplasm. The catalysed reaction is 4-imidazolone-5-propanoate + H2O = N-formimidoyl-L-glutamate. It participates in amino-acid degradation; L-histidine degradation into L-glutamate; N-formimidoyl-L-glutamate from L-histidine: step 3/3. Catalyzes the hydrolytic cleavage of the carbon-nitrogen bond in imidazolone-5-propanoate to yield N-formimidoyl-L-glutamate. It is the third step in the universal histidine degradation pathway. The polypeptide is Imidazolonepropionase (Salmonella paratyphi C (strain RKS4594)).